A 321-amino-acid chain; its full sequence is MRSTIVATFAAGLVVASLVAAHGIVTDIEIDGEWYTSSLVFEDPYKIPIPERISWSFFGSGNSPVADFTTRDIVCNGNASAAALVAEVDAGAEITFYWDTWPESHKGPVMTYLANCGSDCRTVDPGALFYFKIDHAGLEDGEWISDQIIANNLSYTITIPEDIAPGNYLIRHELLALHLASDELGAQFYPMCANLRISGSGIINPTGVQFPGAYKMDDPGILVNIYNDIDTYTIPGPPPYNSDSEFSDDDFESVAEISAASVSVFNSSDFIASTLTKSYSALASVYTKPSTSDFKLKKSFSLSSVSVPDGSSDNFDCNVNG.

Positions 1 to 21 (MRSTIVATFAAGLVVASLVAA) are cleaved as a signal peptide. Residue histidine 22 coordinates Cu(2+). 2 disulfides stabilise this stretch: cysteine 75-cysteine 192 and cysteine 116-cysteine 120. Asparagine 78 carries an N-linked (GlcNAc...) asparagine glycan. Histidine 105 is a binding site for Cu(2+). N-linked (GlcNAc...) asparagine glycosylation is present at asparagine 152. O2-binding residues include histidine 178 and glutamine 187. Cu(2+) is bound at residue tyrosine 189. An N-linked (GlcNAc...) asparagine glycan is attached at asparagine 266.

This sequence belongs to the polysaccharide monooxygenase AA9 family. It depends on Cu(2+) as a cofactor.

The protein localises to the secreted. It carries out the reaction [(1-&gt;4)-beta-D-glucosyl]n+m + reduced acceptor + O2 = 4-dehydro-beta-D-glucosyl-[(1-&gt;4)-beta-D-glucosyl]n-1 + [(1-&gt;4)-beta-D-glucosyl]m + acceptor + H2O.. In terms of biological role, lytic polysaccharide monooxygenase (LPMO) that depolymerizes crystalline and amorphous polysaccharides via the oxidation of scissile alpha- or beta-(1-4)-glycosidic bonds, yielding C1 or C4 oxidation products. Catalysis by LPMOs requires the reduction of the active-site copper from Cu(II) to Cu(I) by a reducing agent and H(2)O(2) or O(2) as a cosubstrate. This is AA9 family lytic polysaccharide monooxygenase D from Geotrichum candidum (Oospora lactis).